We begin with the raw amino-acid sequence, 153 residues long: S-ribosylhomocysteine lyase (153 aa).

Fe cation is bound by residues His57, His61, and Cys124.

This sequence belongs to the LuxS family. As to quaternary structure, homodimer. Fe cation serves as cofactor.

It catalyses the reaction S-(5-deoxy-D-ribos-5-yl)-L-homocysteine = (S)-4,5-dihydroxypentane-2,3-dione + L-homocysteine. In terms of biological role, involved in the synthesis of autoinducer 2 (AI-2) which is secreted by bacteria and is used to communicate both the cell density and the metabolic potential of the environment. The regulation of gene expression in response to changes in cell density is called quorum sensing. Catalyzes the transformation of S-ribosylhomocysteine (RHC) to homocysteine (HC) and 4,5-dihydroxy-2,3-pentadione (DPD). This is S-ribosylhomocysteine lyase from Oceanobacillus iheyensis (strain DSM 14371 / CIP 107618 / JCM 11309 / KCTC 3954 / HTE831).